The following is a 787-amino-acid chain: LPS-assembly protein LptD (787 aa).

Residues 1-39 (MPRKTLLPLVPACDAAPRRKRLAAALLAVPGLVPAVSQA) form the signal peptide.

It belongs to the LptD family. Component of the lipopolysaccharide transport and assembly complex. Interacts with LptE and LptA.

The protein localises to the cell outer membrane. Together with LptE, is involved in the assembly of lipopolysaccharide (LPS) at the surface of the outer membrane. This is LPS-assembly protein LptD from Burkholderia thailandensis (strain ATCC 700388 / DSM 13276 / CCUG 48851 / CIP 106301 / E264).